A 471-amino-acid polypeptide reads, in one-letter code: Chitobiosyldiphosphodolichol beta-mannosyltransferase (471 aa).

The Lumenal segment spans residues 1–31; it reads MDTSSVTMHTERACCHQAQRAVAAMLDKAPS. Residues 32–52 form a helical membrane-spanning segment; the sequence is WLIWTAVLYVGLPFMLYWAVP. Residues 53-126 lie on the Cytoplasmic side of the membrane; it reads YLFYHNKTKS…ALPGASNAGK (74 aa). Positions 127 to 147 form an intramembrane region, helical; that stretch reads SLGQTARKVVLQTCHIVRQLW. Residues 148–471 lie on the Cytoplasmic side of the membrane; it reads ELRGCDYILI…MSELQVVRQS (324 aa).

Belongs to the glycosyltransferase group 1 family.

Its subcellular location is the endoplasmic reticulum membrane. The enzyme catalyses an N,N'-diacetylchitobiosyl-diphospho-di-trans,poly-cis-dolichol + GDP-alpha-D-mannose = a beta-D-Man-(1-&gt;4)-beta-D-GlcNAc-(1-&gt;4)-alpha-D-GlcNAc-diphospho-di-trans,poly-cis-dolichol + GDP + H(+). It functions in the pathway protein modification; protein glycosylation. Participates in the formation of the lipid-linked precursor oligosaccharide for N-glycosylation. Involved in assembling the dolichol-pyrophosphate-GlcNAc(2)-Man(5) intermediate on the cytoplasmic surface of the ER. The sequence is that of Chitobiosyldiphosphodolichol beta-mannosyltransferase (ALG1) from Eremothecium gossypii (strain ATCC 10895 / CBS 109.51 / FGSC 9923 / NRRL Y-1056) (Yeast).